The sequence spans 2163 residues: Myosin-VIIa (2163 aa).

Residues 58-728 (QGVEDMISLG…HDLFLEQERD (671 aa)) enclose the Myosin motor domain. 151-158 (GESGAGKT) is an ATP binding site. Actin-binding stretches follow at residues 607 to 629 (LDSLMKTLSSCQPFFIRCIKPNE) and 707 to 721 (QLGHTKVFLKDAHDL). 4 IQ domains span residues 731–753 (LTRKILILQRSIRGWVYRRRFLR), 754–783 (MRQAAVTIQKFWKGYAQRQRYKKMKIGYMR), 800–822 (LRGHIVRLQARIRGYLVRREYGL), and 823–852 (KMWAVIKIQSHVRRMIAMNRYQKLKLEYRR). A coiled-coil region spans residues 886-914 (RLNEIERKEIEQELEERRRVEVKKNIIND). The disordered stretch occupies residues 937-958 (PDSSSEAPTPHGGRETSVFNDL). A MyTH4 1 domain is found at 1003–1239 (YSRKPLKHPL…PSWLELQATK (237 aa)). The FERM 1 domain maps to 1244–1554 (IMLPITFMDG…YFLEGLKKRS (311 aa)). An SH3 domain is found at 1552 to 1621 (KRSKFVIALQ…PAEIVYVLPS (70 aa)). Positions 1697–1845 (YSREPLKQPL…PHQVEVEAIQ (149 aa)) constitute a MyTH4 2 domain. The region spanning 1851-2154 (IFHKVYFPDD…SYISLMLTNM (304 aa)) is the FERM 2 domain.

Belongs to the TRAFAC class myosin-kinesin ATPase superfamily. Myosin family. Homodimerizes in a two headed molecule through the formation of a coiled-coil rod.

It is found in the cytoplasm. Its function is as follows. Myosins are actin-based motor molecules with ATPase activity. Unconventional myosins serve in intracellular movements: can function in cells as a single-molecule cargo transporter. A very slow and high-duty-ratio motor, may be suitable for tension maintenance of actin filaments. Their highly divergent tails are presumed to bind to membranous compartments, which would be moved relative to actin filaments. Plays a key role in the formation of cellular projections and other actin-based functions required for embryonic and larval viability. Necessary for auditory transduction: plays a role in Johnston organ (JO) organization by functioning in scolopidial apical attachment and therefore to acoustic stimulus propagation from the antenna a2/a3 joint to transducing elements. The chain is Myosin-VIIa from Aedes aegypti (Yellowfever mosquito).